Reading from the N-terminus, the 137-residue chain is Large ribosomal subunit protein uL16c (137 aa).

It belongs to the universal ribosomal protein uL16 family. In terms of assembly, part of the 50S ribosomal subunit.

It localises to the plastid. The protein is Large ribosomal subunit protein uL16c of Aneura mirabilis (Parasitic liverwort).